The primary structure comprises 221 residues: Sentrin-specific protease 8 (221 aa).

M1 bears the N-acetylmethionine mark. The interval 11–174 (SLLRQSDVSL…MYVICNTEAL (164 aa)) is protease. Active-site residues include H102 and D119. The active-site Nucleophile is C163.

Belongs to the peptidase C48 family.

In terms of biological role, protease that catalyzes two essential functions in the NEDD8 pathway: processing of full-length NEDD8 to its mature form and deconjugation of NEDD8 from targeted proteins such as cullins or p53. The polypeptide is Sentrin-specific protease 8 (Senp8) (Mus musculus (Mouse)).